We begin with the raw amino-acid sequence, 127 residues long: uncharacterized protein (127 aa).

This is an uncharacterized protein from Caenorhabditis elegans.